The chain runs to 270 residues: Type III pantothenate kinase (270 aa).

11 to 18 (DAGNSRIK) serves as a coordination point for ATP. Substrate is bound by residues tyrosine 96 and 103–106 (GSDR). The active-site Proton acceptor is aspartate 105. Threonine 129 lines the ATP pocket. Residue threonine 195 coordinates substrate.

Belongs to the type III pantothenate kinase family. As to quaternary structure, homodimer. NH4(+) is required as a cofactor. It depends on K(+) as a cofactor.

It localises to the cytoplasm. The enzyme catalyses (R)-pantothenate + ATP = (R)-4'-phosphopantothenate + ADP + H(+). Its pathway is cofactor biosynthesis; coenzyme A biosynthesis; CoA from (R)-pantothenate: step 1/5. Its function is as follows. Catalyzes the phosphorylation of pantothenate (Pan), the first step in CoA biosynthesis. The polypeptide is Type III pantothenate kinase (Paraburkholderia xenovorans (strain LB400)).